Consider the following 401-residue polypeptide: CCA-adding enzyme (401 aa).

ATP-binding residues include glycine 32 and arginine 35. CTP is bound by residues glycine 32 and arginine 35. Aspartate 45 and aspartate 47 together coordinate Mg(2+). ATP-binding residues include arginine 116, aspartate 159, arginine 162, arginine 165, and arginine 168. CTP is bound by residues arginine 116, aspartate 159, arginine 162, arginine 165, and arginine 168.

Belongs to the tRNA nucleotidyltransferase/poly(A) polymerase family. Bacterial CCA-adding enzyme type 3 subfamily. Homodimer. It depends on Mg(2+) as a cofactor.

The catalysed reaction is a tRNA precursor + 2 CTP + ATP = a tRNA with a 3' CCA end + 3 diphosphate. It catalyses the reaction a tRNA with a 3' CCA end + 2 CTP + ATP = a tRNA with a 3' CCACCA end + 3 diphosphate. In terms of biological role, catalyzes the addition and repair of the essential 3'-terminal CCA sequence in tRNAs without using a nucleic acid template. Adds these three nucleotides in the order of C, C, and A to the tRNA nucleotide-73, using CTP and ATP as substrates and producing inorganic pyrophosphate. tRNA 3'-terminal CCA addition is required both for tRNA processing and repair. Also involved in tRNA surveillance by mediating tandem CCA addition to generate a CCACCA at the 3' terminus of unstable tRNAs. While stable tRNAs receive only 3'-terminal CCA, unstable tRNAs are marked with CCACCA and rapidly degraded. The polypeptide is CCA-adding enzyme (Leuconostoc mesenteroides subsp. mesenteroides (strain ATCC 8293 / DSM 20343 / BCRC 11652 / CCM 1803 / JCM 6124 / NCDO 523 / NBRC 100496 / NCIMB 8023 / NCTC 12954 / NRRL B-1118 / 37Y)).